Here is a 129-residue protein sequence, read N- to C-terminus: Small ribosomal subunit protein uS11 (129 aa).

Belongs to the universal ribosomal protein uS11 family. In terms of assembly, part of the 30S ribosomal subunit. Interacts with proteins S7 and S18. Binds to IF-3.

In terms of biological role, located on the platform of the 30S subunit, it bridges several disparate RNA helices of the 16S rRNA. Forms part of the Shine-Dalgarno cleft in the 70S ribosome. This Parabacteroides distasonis (strain ATCC 8503 / DSM 20701 / CIP 104284 / JCM 5825 / NCTC 11152) protein is Small ribosomal subunit protein uS11.